The chain runs to 265 residues: Undecaprenyl-diphosphatase 1 (265 aa).

Transmembrane regions (helical) follow at residues 4 to 24 (IITA…PISS), 42 to 62 (AKTF…ILYH), 84 to 104 (FHVF…HDII), 108 to 128 (LFQP…MIFA), 184 to 204 (SEFS…LDLL), 217 to 237 (MFAV…VTFL), and 245 to 265 (LKPF…FVLL).

Belongs to the UppP family.

The protein resides in the cell membrane. The enzyme catalyses di-trans,octa-cis-undecaprenyl diphosphate + H2O = di-trans,octa-cis-undecaprenyl phosphate + phosphate + H(+). Catalyzes the dephosphorylation of undecaprenyl diphosphate (UPP). Confers resistance to bacitracin. This is Undecaprenyl-diphosphatase 1 from Bacillus thuringiensis subsp. konkukian (strain 97-27).